We begin with the raw amino-acid sequence, 88 residues long: Stannin (88 aa).

Topologically, residues 1–10 (MSIMDHSPTT) are mitochondrial intermembrane. A helical membrane pass occupies residues 11-31 (GVVTVIVILIAIAALGALILG). Topologically, residues 32–88 (CWCYLRLQRISQSEDEESIVGDGETKEPFLLVQYSAKGPCVERKAKLMTANSPEVHG) are cytoplasmic. A phosphoserine mark is found at Ser49 and Ser83.

It belongs to the stannin family. As to quaternary structure, monomer.

The protein resides in the mitochondrion outer membrane. Functionally, plays a role in the toxic effects of organotins. Plays a role in endosomal maturation. This Mus musculus (Mouse) protein is Stannin (Snn).